A 141-amino-acid polypeptide reads, in one-letter code: Protein NrdI (141 aa).

This sequence belongs to the NrdI family.

In terms of biological role, probably involved in ribonucleotide reductase function. This Bifidobacterium animalis subsp. lactis (strain AD011) protein is Protein NrdI.